The chain runs to 88 residues: Small ribosomal subunit protein bS20 (88 aa).

This sequence belongs to the bacterial ribosomal protein bS20 family.

Functionally, binds directly to 16S ribosomal RNA. The protein is Small ribosomal subunit protein bS20 of Chelativorans sp. (strain BNC1).